The primary structure comprises 162 residues: UPF0763 protein Sdel_0383 (162 aa).

It belongs to the UPF0763 family.

The chain is UPF0763 protein Sdel_0383 from Sulfurospirillum deleyianum (strain ATCC 51133 / DSM 6946 / 5175).